The primary structure comprises 67 residues: Probable Sec-independent protein translocase protein TatE (67 aa).

A helical transmembrane segment spans residues 1-21 (MEGISIAKLLIIGALIVLLFG). Residues 46–67 (EDTSATRTTAEDVPAERVVHKD) are disordered.

The protein belongs to the TatA/E family. TatE subfamily.

It is found in the cell inner membrane. In terms of biological role, part of the twin-arginine translocation (Tat) system that transports large folded proteins containing a characteristic twin-arginine motif in their signal peptide across membranes. TatE shares overlapping functions with TatA. This Pantoea vagans (strain C9-1) (Pantoea agglomerans (strain C9-1)) protein is Probable Sec-independent protein translocase protein TatE.